Consider the following 58-residue polypeptide: T-cell receptor gamma alternate reading frame protein (58 aa).

In terms of tissue distribution, detected at low levels in the ductal cells of the salivary gland but not in the acinar cells (at protein level). Expressed in endometrium (at protein level). Expressed in epithelial cells within the acinar ducts of the prostate.

This Homo sapiens (Human) protein is T-cell receptor gamma alternate reading frame protein.